The primary structure comprises 210 residues: Thiamine-phosphate synthase (210 aa).

4-amino-2-methyl-5-(diphosphooxymethyl)pyrimidine contacts are provided by residues 39–43 (QLREK) and N71. The Mg(2+) site is built by D72 and D91. Position 110 (S110) interacts with 4-amino-2-methyl-5-(diphosphooxymethyl)pyrimidine. 134–136 (TPT) is a binding site for 2-[(2R,5Z)-2-carboxy-4-methylthiazol-5(2H)-ylidene]ethyl phosphate. K137 serves as a coordination point for 4-amino-2-methyl-5-(diphosphooxymethyl)pyrimidine. G163 provides a ligand contact to 2-[(2R,5Z)-2-carboxy-4-methylthiazol-5(2H)-ylidene]ethyl phosphate.

This sequence belongs to the thiamine-phosphate synthase family. Requires Mg(2+) as cofactor.

The enzyme catalyses 2-[(2R,5Z)-2-carboxy-4-methylthiazol-5(2H)-ylidene]ethyl phosphate + 4-amino-2-methyl-5-(diphosphooxymethyl)pyrimidine + 2 H(+) = thiamine phosphate + CO2 + diphosphate. It carries out the reaction 2-(2-carboxy-4-methylthiazol-5-yl)ethyl phosphate + 4-amino-2-methyl-5-(diphosphooxymethyl)pyrimidine + 2 H(+) = thiamine phosphate + CO2 + diphosphate. The catalysed reaction is 4-methyl-5-(2-phosphooxyethyl)-thiazole + 4-amino-2-methyl-5-(diphosphooxymethyl)pyrimidine + H(+) = thiamine phosphate + diphosphate. Its pathway is cofactor biosynthesis; thiamine diphosphate biosynthesis; thiamine phosphate from 4-amino-2-methyl-5-diphosphomethylpyrimidine and 4-methyl-5-(2-phosphoethyl)-thiazole: step 1/1. Its function is as follows. Condenses 4-methyl-5-(beta-hydroxyethyl)thiazole monophosphate (THZ-P) and 2-methyl-4-amino-5-hydroxymethyl pyrimidine pyrophosphate (HMP-PP) to form thiamine monophosphate (TMP). In Campylobacter jejuni subsp. jejuni serotype O:2 (strain ATCC 700819 / NCTC 11168), this protein is Thiamine-phosphate synthase.